Reading from the N-terminus, the 433-residue chain is KICSTOR complex protein ITFG2 (433 aa).

One copy of the FG-GAP 1; atypical repeat lies at 19–48; that stretch reads FPHAICLGDVDNDTLNELVVGDTSGKVSVY. S104 carries the post-translational modification Phosphoserine. An FG-GAP 2; atypical repeat occupies 126-155; it reads NTKVMLISDIDGDGCRELVVGYTDRVVRAF. The residue at position 220 (S220) is a Phosphoserine.

In terms of assembly, part of the KICSTOR complex composed of KPTN, ITFG2, KICS2 and SZT2. SZT2 probably serves as a link between the other three proteins in the KICSTOR complex and may mediate the direct interaction with the GATOR complex via GATOR1. The KICSTOR complex interacts directly with the GATOR1 complex and most probably indirectly with the GATOR2 complex in an amino acid-independent manner.

The protein resides in the lysosome membrane. As part of the KICSTOR complex functions in the amino acid-sensing branch of the TORC1 signaling pathway. Recruits, in an amino acid-independent manner, the GATOR1 complex to the lysosomal membranes and allows its interaction with GATOR2 and the RAG GTPases. Functions upstream of the RAG GTPases and is required to negatively regulate mTORC1 signaling in absence of amino acids. In absence of the KICSTOR complex mTORC1 is constitutively localized to the lysosome and activated. The KICSTOR complex is also probably involved in the regulation of mTORC1 by glucose. This chain is KICSTOR complex protein ITFG2, found in Pongo abelii (Sumatran orangutan).